A 234-amino-acid polypeptide reads, in one-letter code: Leucyl/phenylalanyl-tRNA--protein transferase (234 aa).

The protein belongs to the L/F-transferase family.

It localises to the cytoplasm. The enzyme catalyses N-terminal L-lysyl-[protein] + L-leucyl-tRNA(Leu) = N-terminal L-leucyl-L-lysyl-[protein] + tRNA(Leu) + H(+). The catalysed reaction is N-terminal L-arginyl-[protein] + L-leucyl-tRNA(Leu) = N-terminal L-leucyl-L-arginyl-[protein] + tRNA(Leu) + H(+). It carries out the reaction L-phenylalanyl-tRNA(Phe) + an N-terminal L-alpha-aminoacyl-[protein] = an N-terminal L-phenylalanyl-L-alpha-aminoacyl-[protein] + tRNA(Phe). Functionally, functions in the N-end rule pathway of protein degradation where it conjugates Leu, Phe and, less efficiently, Met from aminoacyl-tRNAs to the N-termini of proteins containing an N-terminal arginine or lysine. The protein is Leucyl/phenylalanyl-tRNA--protein transferase of Salmonella agona (strain SL483).